We begin with the raw amino-acid sequence, 392 residues long: 23S rRNA (uracil(747)-C(5))-methyltransferase RlmC (392 aa).

Positions 4, 12, 15, and 93 each coordinate [4Fe-4S] cluster. The S-adenosyl-L-methionine site is built by Gln-218, Phe-247, Glu-275, and Asn-321. The Nucleophile role is filled by Cys-348.

The protein belongs to the class I-like SAM-binding methyltransferase superfamily. RNA M5U methyltransferase family. RlmC subfamily.

It catalyses the reaction uridine(747) in 23S rRNA + S-adenosyl-L-methionine = 5-methyluridine(747) in 23S rRNA + S-adenosyl-L-homocysteine + H(+). In terms of biological role, catalyzes the formation of 5-methyl-uridine at position 747 (m5U747) in 23S rRNA. The sequence is that of 23S rRNA (uracil(747)-C(5))-methyltransferase RlmC from Haemophilus influenzae (strain 86-028NP).